The sequence spans 346 residues: MLAARLVCLRTLPSRVFQPTFITKASPLVKNSITKNQWLVTPSREYATKTRIRTHRGKTGQELKEAALEPSMEKIFKIDQMGRWFVAGGAAVGLGALCYYGLGMSNEIGAIEKAVIWPQYVKDRIHSTYMYLAGSIGLTALSALAVARTPALMNFMMTGSWVTIGATFAAMIGAGMLVHSISYEQSPGPKHLAWMLHSGVMGAVVAPLTILGGPLLLRAAWYTAGIVGGLSTVAMCAPSEKFLNMGAPLGVGLGLVFASSLGSMFLPPTSVAGATLYSVAMYGGLVLFSMFLLYDTQKVIKRAEITPMYGAQKYDPINSMLTIYMDTLNIFMRVATMLATGSNRKK.

Residues 1–45 (MLAARLVCLRTLPSRVFQPTFITKASPLVKNSITKNQWLVTPSRE) constitute a mitochondrion transit peptide. Over 46–83 (YATKTRIRTHRGKTGQELKEAALEPSMEKIFKIDQMGR) the chain is Mitochondrial matrix. Residues 84–104 (WFVAGGAAVGLGALCYYGLGM) form a helical membrane-spanning segment. The Mitochondrial intermembrane segment spans residues 105 to 126 (SNEIGAIEKAVIWPQYVKDRIH). Residues 127-147 (STYMYLAGSIGLTALSALAVA) traverse the membrane as a helical segment. The Mitochondrial matrix segment spans residues 148-160 (RTPALMNFMMTGS). Residues 161 to 181 (WVTIGATFAAMIGAGMLVHSI) traverse the membrane as a helical segment. Topologically, residues 182 to 191 (SYEQSPGPKH) are mitochondrial intermembrane. A helical transmembrane segment spans residues 192–212 (LAWMLHSGVMGAVVAPLTILG). Residues 213 to 214 (GP) are Mitochondrial matrix-facing. Residues 215–235 (LLLRAAWYTAGIVGGLSTVAM) traverse the membrane as a helical segment. Topologically, residues 236-245 (CAPSEKFLNM) are mitochondrial intermembrane. A helical membrane pass occupies residues 246 to 266 (GAPLGVGLGLVFASSLGSMFL). The Mitochondrial matrix segment spans residues 267–272 (PPTSVA). Residues 273–293 (GATLYSVAMYGGLVLFSMFLL) form a helical membrane-spanning segment. At 294-346 (YDTQKVIKRAEITPMYGAQKYDPINSMLTIYMDTLNIFMRVATMLATGSNRKK) the chain is on the mitochondrial intermembrane side.

It belongs to the BI1 family. Interacts with LETM1 and AFG3L2. In terms of processing, undergoes AFG3L2-mediated proteolytic degradation, upon hyperpolarization of mitochondria.

The protein resides in the mitochondrion inner membrane. It catalyses the reaction Ca(2+)(in) + 2 H(+)(out) = Ca(2+)(out) + 2 H(+)(in). It carries out the reaction K(+)(in) + H(+)(out) = K(+)(out) + H(+)(in). Plays an important role in maintenance of mitochondrial morphology and in mediating either calcium or potassium/proton antiport. Mediates proton-dependent calcium efflux from mitochondrion. Also functions as an electroneutral mitochondrial proton/potassium exchanger. Required for the mitochondrial tubular network and cristae organization. Involved in apoptotic release of cytochrome c. Inhibits AFG3L2 proteolytic activity, stimulating respiration and stabilizing respiratory enzymes in actively respiring mitochondria. However, when mitochondria become hyperpolarized, GHITM loses its inhibitory activity toward AFG3L2 and the now active AFG3L2 turns first on GHITM and, if hyperpolarization persists, on other proteins of the mitochondria, leading to a broad remodeling of the mitochondrial proteome. In Mus musculus (Mouse), this protein is Growth hormone-inducible transmembrane protein (Ghitm).